The chain runs to 65 residues: DNA gyrase inhibitor YacG (65 aa).

Positions 10, 13, 29, and 33 each coordinate Zn(2+). The interval 45–65 (EKAIPGAPDMSDSDGWSEDQY) is disordered. Positions 55-65 (SDSDGWSEDQY) are enriched in acidic residues.

It belongs to the DNA gyrase inhibitor YacG family. In terms of assembly, interacts with GyrB. Zn(2+) is required as a cofactor.

In terms of biological role, inhibits all the catalytic activities of DNA gyrase by preventing its interaction with DNA. Acts by binding directly to the C-terminal domain of GyrB, which probably disrupts DNA binding by the gyrase. This chain is DNA gyrase inhibitor YacG, found in Vibrio cholerae serotype O1 (strain ATCC 39315 / El Tor Inaba N16961).